The primary structure comprises 310 residues: Olfactory receptor 5P52 (310 aa).

Residues M1–I25 are Extracellular-facing. An N-linked (GlcNAc...) asparagine glycan is attached at N5. A helical membrane pass occupies residues V26–I46. Topologically, residues T47–Q54 are cytoplasmic. The chain crosses the membrane as a helical span at residues L55–T75. The Extracellular segment spans residues S76–A99. Residues C97 and C189 are joined by a disulfide bond. A helical membrane pass occupies residues Q100–Y120. The Cytoplasmic portion of the chain corresponds to D121–S133. A helical membrane pass occupies residues T134 to V154. Residues N155–G196 are Extracellular-facing. The helical transmembrane segment at I197 to S217 threads the bilayer. At Y218–A237 the chain is on the cytoplasmic side. The chain crosses the membrane as a helical span at residues F238–I258. Residues Y259 to N271 are Extracellular-facing. The chain crosses the membrane as a helical span at residues K272–L292. Over R293 to S310 the chain is Cytoplasmic.

Belongs to the G-protein coupled receptor 1 family.

Its subcellular location is the cell membrane. Potential odorant receptor. In Mus musculus (Mouse), this protein is Olfactory receptor 5P52.